Consider the following 185-residue polypeptide: Elongation factor P (185 aa).

Belongs to the elongation factor P family.

It is found in the cytoplasm. The protein operates within protein biosynthesis; polypeptide chain elongation. Its function is as follows. Involved in peptide bond synthesis. Stimulates efficient translation and peptide-bond synthesis on native or reconstituted 70S ribosomes in vitro. Probably functions indirectly by altering the affinity of the ribosome for aminoacyl-tRNA, thus increasing their reactivity as acceptors for peptidyl transferase. The sequence is that of Elongation factor P from Caldanaerobacter subterraneus subsp. tengcongensis (strain DSM 15242 / JCM 11007 / NBRC 100824 / MB4) (Thermoanaerobacter tengcongensis).